A 189-amino-acid chain; its full sequence is Interferon alpha-F (189 aa).

The signal sequence occupies residues 1–23 (MAPAWSLLLALLLLSCNAICSLG). 2 cysteine pairs are disulfide-bonded: Cys-24/Cys-122 and Cys-52/Cys-162.

It belongs to the alpha/beta interferon family.

It is found in the secreted. Its function is as follows. Produced by macrophages, IFN-alpha have antiviral activities. Interferon stimulates the production of two enzymes: a protein kinase and an oligoadenylate synthetase. In Bos taurus (Bovine), this protein is Interferon alpha-F (IFNAF).